The sequence spans 112 residues: Cell cycle protein GpsB (112 aa).

Residues 42-77 (YQKMADMNNEVVKLSEENNKLKKEVEELRLRVATSR) adopt a coiled-coil conformation. The interval 75 to 97 (TSRPSDNKSFSSNNSSSSNNNVD) is disordered. The span at 81-95 (NKSFSSNNSSSSNNN) shows a compositional bias: low complexity.

The protein belongs to the GpsB family. In terms of assembly, forms polymers through the coiled coil domains. Interacts with PBP1, MreC and EzrA.

Its subcellular location is the cytoplasm. In terms of biological role, divisome component that associates with the complex late in its assembly, after the Z-ring is formed, and is dependent on DivIC and PBP2B for its recruitment to the divisome. Together with EzrA, is a key component of the system that regulates PBP1 localization during cell cycle progression. Its main role could be the removal of PBP1 from the cell pole after pole maturation is completed. Also contributes to the recruitment of PBP1 to the division complex. Not essential for septum formation. This chain is Cell cycle protein GpsB, found in Staphylococcus haemolyticus (strain JCSC1435).